The sequence spans 589 residues: Malto-oligosyltrehalose trehalohydrolase (589 aa).

256-261 (GFDAVH) lines the substrate pocket. Asp-258 (nucleophile) is an active-site residue. Glu-295 functions as the Proton donor in the catalytic mechanism. Substrate contacts are provided by residues 320–324 (DDFHT) and 390–395 (HDQIGN).

This sequence belongs to the glycosyl hydrolase 13 family.

The protein localises to the cytoplasm. It catalyses the reaction hydrolysis of (1-&gt;4)-alpha-D-glucosidic linkage in 4-alpha-D-[(1-&gt;4)-alpha-D-glucanosyl]n trehalose to yield trehalose and (1-&gt;4)-alpha-D-glucan.. Its pathway is glycan biosynthesis; trehalose biosynthesis. This chain is Malto-oligosyltrehalose trehalohydrolase (treZ), found in Brevibacterium helvolum.